The chain runs to 42 residues: Photosystem I reaction center subunit IX (42 aa).

A helical membrane pass occupies residues 7-27 (YLSTAPVLSALWFAILAGLLI).

Belongs to the PsaJ family.

It localises to the plastid. Its subcellular location is the chloroplast thylakoid membrane. In terms of biological role, may help in the organization of the PsaE and PsaF subunits. This is Photosystem I reaction center subunit IX from Chlorokybus atmophyticus (Soil alga).